The chain runs to 182 residues: NADH-quinone oxidoreductase subunit I (182 aa).

2 4Fe-4S ferredoxin-type domains span residues 50–82 and 92–121; these read IILSRDPDGDERCVACNLCAVACPVGCISLQKA and EFFRINFSRCIFCGLCEEACPTTAIQMTPD. Cys62, Cys65, Cys68, Cys72, Cys101, Cys104, Cys107, and Cys111 together coordinate [4Fe-4S] cluster.

This sequence belongs to the complex I 23 kDa subunit family. NDH-1 is composed of 14 different subunits. Subunits NuoA, H, J, K, L, M, N constitute the membrane sector of the complex. It depends on [4Fe-4S] cluster as a cofactor.

Its subcellular location is the cell inner membrane. The catalysed reaction is a quinone + NADH + 5 H(+)(in) = a quinol + NAD(+) + 4 H(+)(out). NDH-1 shuttles electrons from NADH, via FMN and iron-sulfur (Fe-S) centers, to quinones in the respiratory chain. The immediate electron acceptor for the enzyme in this species is believed to be ubiquinone. Couples the redox reaction to proton translocation (for every two electrons transferred, four hydrogen ions are translocated across the cytoplasmic membrane), and thus conserves the redox energy in a proton gradient. The protein is NADH-quinone oxidoreductase subunit I of Psychrobacter arcticus (strain DSM 17307 / VKM B-2377 / 273-4).